Here is a 427-residue protein sequence, read N- to C-terminus: Protein TIFY 6a (427 aa).

Positions 1–25 are enriched in basic and acidic residues; the sequence is MERDFLGAIGRKEEAAGKPEEHSDY. A disordered region spans residues 1-33; that stretch reads MERDFLGAIGRKEEAAGKPEEHSDYRGGGGGAS. Positions 196–231 constitute a Tify domain; the sequence is QNPKVTQMTIFYDGLVNVFDNIPVEKAQELMLLASR. Composition is skewed to polar residues over residues 293–303 and 317–327; these read LPKSSSSSNDS and PLSQASPSQPI. The segment at 293–327 is disordered; it reads LPKSSSSSNDSAGPKSGGLPLAVTPLSQASPSQPI. Residues 343 to 367 carry the Jas motif; sequence PQARKASLARFLEKRKERVSSVAPY. A Nuclear localization signal motif is present at residues 345–352; sequence ARKASLAR. Positions 360–427 are disordered; the sequence is RVSSVAPYPS…QEPPSTKLQI (68 aa). Composition is skewed to polar residues over residues 369–402 and 411–427; these read SSKS…NNCE and RNIS…KLQI.

It belongs to the TIFY/JAZ family. Ubiquitinated.

Its subcellular location is the nucleus. Repressor of jasmonate responses. The polypeptide is Protein TIFY 6a (Oryza sativa subsp. indica (Rice)).